A 1075-amino-acid chain; its full sequence is DNA-directed RNA polymerase subunit beta (1075 aa).

The protein belongs to the RNA polymerase beta chain family. In plastids the minimal PEP RNA polymerase catalytic core is composed of four subunits: alpha, beta, beta', and beta''. When a (nuclear-encoded) sigma factor is associated with the core the holoenzyme is formed, which can initiate transcription.

The protein resides in the plastid. It is found in the chloroplast. The enzyme catalyses RNA(n) + a ribonucleoside 5'-triphosphate = RNA(n+1) + diphosphate. In terms of biological role, DNA-dependent RNA polymerase catalyzes the transcription of DNA into RNA using the four ribonucleoside triphosphates as substrates. The sequence is that of DNA-directed RNA polymerase subunit beta from Saccharum officinarum (Sugarcane).